The following is a 251-amino-acid chain: V-set and transmembrane domain-containing protein 2B (251 aa).

An N-terminal signal peptide occupies residues 1-25 (MEKQGLFSALCYLMLNTPLLFSVNA). Residues 26–142 (TFTEVPKDVT…DETQEHKAQA (117 aa)) enclose the Ig-like V-type domain. Residues 26–226 (TFTEVPKDVT…RQQHGSGTGP (201 aa)) lie on the Extracellular side of the membrane. Cysteine 46 and cysteine 125 form a disulfide bridge. The segment at 157 to 213 (AAEAVSHIQSSGPRRNNPSSRATPEPGNKRAVPPAENLAPSLSTAASSSASPAPGKA) is disordered. 2 stretches are compositionally biased toward low complexity: residues 166-177 (SSGPRRNNPSSR) and 195-213 (APSL…PGKA). A helical transmembrane segment spans residues 227–247 (IFANDPALYMFLLIFHQLVYL). Topologically, residues 248-251 (LLNH) are cytoplasmic.

The protein resides in the membrane. This chain is V-set and transmembrane domain-containing protein 2B (vstm2b), found in Xenopus tropicalis (Western clawed frog).